The chain runs to 395 residues: Elongation factor Tu (395 aa).

Residues 10-204 enclose the tr-type G domain; that stretch reads KSHVNIGTIG…AVDEYIPTPE (195 aa). The interval 19–26 is G1; sequence GHVDHGKT. 19-26 contributes to the GTP binding site; the sequence is GHVDHGKT. Threonine 26 provides a ligand contact to Mg(2+). Residues 60-64 are G2; the sequence is GITIN. The segment at 81-84 is G3; sequence DCPG. Residues 81–85 and 136–139 each bind GTP; these read DCPGH and NKMD. The tract at residues 136 to 139 is G4; it reads NKMD. The G5 stretch occupies residues 174-176; sequence SAL.

This sequence belongs to the TRAFAC class translation factor GTPase superfamily. Classic translation factor GTPase family. EF-Tu/EF-1A subfamily. In terms of assembly, monomer.

It is found in the cytoplasm. The catalysed reaction is GTP + H2O = GDP + phosphate + H(+). Functionally, GTP hydrolase that promotes the GTP-dependent binding of aminoacyl-tRNA to the A-site of ribosomes during protein biosynthesis. The polypeptide is Elongation factor Tu (Enterococcus faecalis (strain ATCC 700802 / V583)).